The primary structure comprises 839 residues: Toll-like receptor 4 (839 aa).

The N-terminal stretch at 1–23 is a signal peptide; it reads MMSASRLAGTLIPAMAFLSCVRP. At 24–631 the chain is on the extracellular side; that stretch reads ESWEPCVEVV…SLNITCQMNK (608 aa). Cys-29 and Cys-40 are joined by a disulfide. An N-linked (GlcNAc...) asparagine glycan is attached at Asn-35. LRR repeat units follow at residues 55 to 76, 79 to 100, 103 to 124, 127 to 148, and 151 to 172; these read STKN…SFFS, ELQV…AYQS, HLST…AFSG, SLQK…PIGH, and TLKE…EYFS. Asn-173 carries an N-linked (GlcNAc...) asparagine glycan. 3 LRR repeats span residues 176–199, 205–225, and 227–247; these read NLEH…RVLH, NLSL…AFKE, and RLHK…KTCI. Asn-205 carries N-linked (GlcNAc...) asparagine glycosylation. Cys-281 and Cys-306 form a disulfide bridge. 2 N-linked (GlcNAc...) asparagine glycosylation sites follow: Asn-282 and Asn-309. 10 LRR repeats span residues 331–351, 352–373, 374–394, 400–422, 423–444, 448–456, 472–495, 497–518, 521–542, and 545–565; these read GWQH…LKLK, SLKR…VDLP, SLEF…CSQS, SLKY…LGLE, QLEH…SVFL, NLIYLDISH, SLEV…FTEL, NLTF…AFNS, SLQV…PYKC, and SLQV…QELQ. A disulfide bridge links Cys-390 with Cys-391. N-linked (GlcNAc...) asparagine glycosylation is found at Asn-497 and Asn-526. An N-linked (GlcNAc...) asparagine glycan is attached at Asn-575. One can recognise an LRRCT domain in the interval 579-629; it reads NDFACTCEHQSFLQWIKDQRQLLVEVERMECATPSDKQGMPVLSLNITCQM. Intrachain disulfides connect Cys-583/Cys-609 and Cys-585/Cys-627. Residues Asn-624 and Asn-630 are each glycosylated (N-linked (GlcNAc...) asparagine). Residues 632-652 traverse the membrane as a helical segment; that stretch reads TIIGVSVLSVLVVSVVAVLVY. The Cytoplasmic portion of the chain corresponds to 653-839; it reads KFYFHLMLLA…GCNWQEATSI (187 aa). Positions 672–815 constitute a TIR domain; sequence NIYDAFVIYS…IFWRRLRKAL (144 aa).

This sequence belongs to the Toll-like receptor family. As to quaternary structure, belongs to the lipopolysaccharide (LPS) receptor, a multi-protein complex containing at least CD14, LY96 and TLR4. Binding to bacterial LPS leads to homodimerization. Interacts with LY96 via the extracellular domain. Interacts with MYD88. Interacts (via TIR domains) with TIRAP. Interacts with TICAM2. Interacts with NOX4. Interacts with CNPY3. Interacts with HSP90B1. The interaction with both CNPY3 and HSP90B1 is required for proper folding in the endoplasmic reticulum. Interacts with MAP3K21; this interaction leads to negative regulation of TLR4 signaling. Interacts with CD36, following CD36 stimulation by oxLDL or amyloid-beta 42, and forms a heterodimer with TLR6. The trimeric complex is internalized and triggers inflammatory response. LYN kinase activity facilitates TLR4-TLR6 heterodimerization and signal initiation. Interacts with TICAM1 in response to LPS in a WDFY1-dependent manner. Interacts with WDFY1 in response to LPS. Interacts with SMPDL3B. Interacts with CEACAM1; upon lipopolysaccharide stimulation, forms a complex including TLR4 and the phosphorylated form of SYK and CEACAM1, which in turn, recruits PTPN6 that dephosphorylates SYK, reducing the production of reactive oxygen species (ROS) and lysosome disruption, which in turn, reduces the activity of the inflammasome. Interacts with RFTN1; the interaction occurs in response to lipopolysaccharide stimulation. Interacts with SCIMP; the interaction occurs in response to lipopolysaccharide stimulation and is enhanced by phosphorylation of SCIMP by LYN. This interaction facilitates the phosphorylation of TLR4 by LYN which elicits a selective cytokine response in macrophages. Interacts with TRAF3IP3. Interacts with TREM1; this interaction enhances TLR4-mediated inflammatory response. Interacts with ZG16B/PAUF. Interacts with CD82; this interaction inhibits TLR4-mediated signaling pathway. Interacts with neutrophil recruitment protein from Aedes aegypti saliva; the interaction probably promotes activation of canonical NF-kappa-B signaling in skin-resident macrophages and subsequent expression of neutrophil chemoattractants. (Microbial infection) In case of infection, interacts with uropathogenic E.coli protein TcpC. In terms of assembly, (Microbial infection) In case of infection, interacts with B.melitensis protein TcpB; TcpB abolishes the TLR4-TIRAP interaction in vitro. As to quaternary structure, (Microbial infection) Interacts with ebolavirus protein GP; this interaction leads to the production of proinflammatory cytokines and suppressor of cytokine signaling 1/SOCS1. Post-translationally, N-Glycosylation of Asn-526 and Asn-575 by STT3A-containing OST-A complex is necessary for the expression of TLR4 on the cell surface and the LPS-response. Likewise, mutants lacking two or more of the other N-glycosylation sites were deficient in interaction with LPS. Phosphorylated on tyrosine residues by LYN after binding lipopolysaccharide. In terms of processing, ubiquitinated by RNF128 via 'Lys-28'-linked polyubiquitin chains, leading to proteasomal degradation. As to expression, highly expressed in placenta, spleen and peripheral blood leukocytes. Detected in monocytes, macrophages, dendritic cells and several types of T-cells. Expressed in pancreatic cancer cells but not in normal pancreatic cells (at protein level).

The protein localises to the cell membrane. The protein resides in the early endosome. Its subcellular location is the cell projection. It is found in the ruffle. Functionally, transmembrane receptor that functions as a pattern recognition receptor recognizing pathogen- and damage-associated molecular patterns (PAMPs and DAMPs) to induce innate immune responses via downstream signaling pathways. At the plasma membrane, cooperates with LY96 to mediate the innate immune response to bacterial lipopolysaccharide (LPS). Also involved in LPS-independent inflammatory responses triggered by free fatty acids, such as palmitate, and Ni(2+). Mechanistically, acts via MYD88, TIRAP and TRAF6, leading to NF-kappa-B activation, cytokine secretion and the inflammatory response. Alternatively, CD14-mediated TLR4 internalization via endocytosis is associated with the initiation of a MYD88-independent signaling via the TICAM1-TBK1-IRF3 axis leading to type I interferon production. In addition to the secretion of proinflammatory cytokines, initiates the activation of NLRP3 inflammasome and formation of a positive feedback loop between autophagy and NF-kappa-B signaling cascade. In complex with TLR6, promotes inflammation in monocytes/macrophages by associating with TLR6 and the receptor CD86. Upon ligand binding, such as oxLDL or amyloid-beta 42, the TLR4:TLR6 complex is internalized and triggers inflammatory response, leading to NF-kappa-B-dependent production of CXCL1, CXCL2 and CCL9 cytokines, via MYD88 signaling pathway, and CCL5 cytokine, via TICAM1 signaling pathway. In myeloid dendritic cells, vesicular stomatitis virus glycoprotein G but not LPS promotes the activation of IRF7, leading to type I IFN production in a CD14-dependent manner. Required for the migration-promoting effects of ZG16B/PAUF on pancreatic cancer cells. This is Toll-like receptor 4 (TLR4) from Homo sapiens (Human).